The chain runs to 362 residues: Mannan endo-1,4-beta-mannosidase (362 aa).

The first 26 residues, 1 to 26 (MFKKHTISLLIIFLLASAVLAKPIEA), serve as a signal peptide directing secretion. The GH26 domain occupies 38 to 349 (QTTKTVMNWL…YHDSWTLNKG (312 aa)). Histidine 131 lines the substrate pocket. Glutamate 193 serves as the catalytic Proton donor. Residues tryptophan 198 and tyrosine 268 each contribute to the substrate site. Glutamate 292 functions as the Nucleophile in the catalytic mechanism. 324-325 (WN) serves as a coordination point for substrate.

This sequence belongs to the glycosyl hydrolase 26 family. Homodimer.

It localises to the secreted. It catalyses the reaction Random hydrolysis of (1-&gt;4)-beta-D-mannosidic linkages in mannans, galactomannans and glucomannans.. Involved in the degradation of glucomannan. Catalyzes the endo hydrolysis of beta-1,4-linked mannan, galactomannan and glucomannan. This is Mannan endo-1,4-beta-mannosidase from Bacillus subtilis (strain 168).